Here is a 41-residue protein sequence, read N- to C-terminus: MENFQKYLSTAPVLLTIWLTFTAGFIIEINRFFPDLLGLYF.

The helical transmembrane segment at 7 to 27 (YLSTAPVLLTIWLTFTAGFII) threads the bilayer.

This sequence belongs to the PsaJ family.

Its subcellular location is the plastid. It is found in the chloroplast thylakoid membrane. May help in the organization of the PsaE and PsaF subunits. This is Photosystem I reaction center subunit IX from Phaeodactylum tricornutum (strain CCAP 1055/1).